The following is a 167-amino-acid chain: Protein-export protein SecB (167 aa).

It belongs to the SecB family. In terms of assembly, homotetramer, a dimer of dimers. One homotetramer interacts with 1 SecA dimer.

It is found in the cytoplasm. Its function is as follows. One of the proteins required for the normal export of preproteins out of the cell cytoplasm. It is a molecular chaperone that binds to a subset of precursor proteins, maintaining them in a translocation-competent state. It also specifically binds to its receptor SecA. This chain is Protein-export protein SecB, found in Wolbachia pipientis wMel.